Consider the following 397-residue polypeptide: MSESVHTNTSLWSKGMKAVIVAQFLSAFGDNALLFATLALLKAQFYPEWSQPVLQMVFVGAYILFAPFVGQVADSFAKGRVMMFANGLKLLGAASICFGFNPFVGYTLVGIGAAAYSPAKYGILGELTTGDKLVKANGLMEASTIAAILLGSVAGGVLADLHVLVALAACALAYAGAVAANIYIPKLAAARPGQSWNVLKMTCSFKSACTSLWQNGETRFSLVGTSLFWGAGVTLRFLLVLWVPVALGITDNATPTYLNAMVAIGIVLGAGAAAKLVTLETVSRCMPAGILIGVVVLFFSLQHELLPAYALLMLIGVLGGFFVVPLNALLQERGKKSVGAGNAIAVQNLGENSAMLLMLGIYSLAVLVGIPVVPIGIGFGTLFALAITALWIWQRRH.

Topologically, residues 1–17 are periplasmic; sequence MSESVHTNTSLWSKGMK. The chain crosses the membrane as a helical span at residues 18–38; that stretch reads AVIVAQFLSAFGDNALLFATL. Residues 39-52 are Cytoplasmic-facing; it reads ALLKAQFYPEWSQP. Residues 53–73 traverse the membrane as a helical segment; that stretch reads VLQMVFVGAYILFAPFVGQVA. The Periplasmic portion of the chain corresponds to 74–90; it reads DSFAKGRVMMFANGLKL. A helical membrane pass occupies residues 91–111; that stretch reads LGAASICFGFNPFVGYTLVGI. Topologically, residues 112-144 are cytoplasmic; it reads GAAAYSPAKYGILGELTTGDKLVKANGLMEAST. A helical membrane pass occupies residues 145 to 165; the sequence is IAAILLGSVAGGVLADLHVLV. Position 166 (alanine 166) is a topological domain, periplasmic. Residues 167–187 traverse the membrane as a helical segment; the sequence is LAACALAYAGAVAANIYIPKL. Residues 188 to 226 lie on the Cytoplasmic side of the membrane; the sequence is AAARPGQSWNVLKMTCSFKSACTSLWQNGETRFSLVGTS. The chain crosses the membrane as a helical span at residues 227–247; sequence LFWGAGVTLRFLLVLWVPVAL. Over 248 to 256 the chain is Periplasmic; that stretch reads GITDNATPT. A helical membrane pass occupies residues 257–277; that stretch reads YLNAMVAIGIVLGAGAAAKLV. The Cytoplasmic portion of the chain corresponds to 278–280; that stretch reads TLE. Residues 281–301 traverse the membrane as a helical segment; that stretch reads TVSRCMPAGILIGVVVLFFSL. Topologically, residues 302–304 are periplasmic; the sequence is QHE. Residues 305–325 traverse the membrane as a helical segment; that stretch reads LLPAYALLMLIGVLGGFFVVP. The Cytoplasmic portion of the chain corresponds to 326–343; that stretch reads LNALLQERGKKSVGAGNA. Residues 344–364 form a helical membrane-spanning segment; the sequence is IAVQNLGENSAMLLMLGIYSL. Residues 365 to 366 are Periplasmic-facing; sequence AV. Residues 367-387 traverse the membrane as a helical segment; that stretch reads LVGIPVVPIGIGFGTLFALAI. At 388–397 the chain is on the cytoplasmic side; it reads TALWIWQRRH.

Belongs to the major facilitator superfamily. LplT (TC 2.A.1.42) family.

The protein localises to the cell inner membrane. Its function is as follows. Catalyzes the facilitated diffusion of 2-acyl-glycero-3-phosphoethanolamine (2-acyl-GPE) into the cell. In Escherichia fergusonii (strain ATCC 35469 / DSM 13698 / CCUG 18766 / IAM 14443 / JCM 21226 / LMG 7866 / NBRC 102419 / NCTC 12128 / CDC 0568-73), this protein is Lysophospholipid transporter LplT.